Here is a 381-residue protein sequence, read N- to C-terminus: Chaperone protein DnaJ (381 aa).

The J domain maps to 5 to 70 (DFYEVLGVSR…QKKAAYDQYG (66 aa)). A CR-type zinc finger spans residues 136 to 214 (GVTKEIEVPT…CHGQGRKQKT (79 aa)). Zn(2+) contacts are provided by Cys149, Cys152, Cys166, Cys169, Cys188, Cys191, Cys202, and Cys205. CXXCXGXG motif repeat units lie at residues 149 to 156 (CDSCDGSG), 166 to 173 (CGTCHGHG), 188 to 195 (CPTCHGKG), and 202 to 209 (CNECHGQG).

It belongs to the DnaJ family. Homodimer. Zn(2+) serves as cofactor.

It is found in the cytoplasm. Participates actively in the response to hyperosmotic and heat shock by preventing the aggregation of stress-denatured proteins and by disaggregating proteins, also in an autonomous, DnaK-independent fashion. Unfolded proteins bind initially to DnaJ; upon interaction with the DnaJ-bound protein, DnaK hydrolyzes its bound ATP, resulting in the formation of a stable complex. GrpE releases ADP from DnaK; ATP binding to DnaK triggers the release of the substrate protein, thus completing the reaction cycle. Several rounds of ATP-dependent interactions between DnaJ, DnaK and GrpE are required for fully efficient folding. Also involved, together with DnaK and GrpE, in the DNA replication of plasmids through activation of initiation proteins. This chain is Chaperone protein DnaJ, found in Vibrio parahaemolyticus serotype O3:K6 (strain RIMD 2210633).